A 306-amino-acid chain; its full sequence is Ribosomal protein L11 methyltransferase (306 aa).

Positions 154, 179, 201, and 242 each coordinate S-adenosyl-L-methionine.

Belongs to the methyltransferase superfamily. PrmA family.

The protein localises to the cytoplasm. It carries out the reaction L-lysyl-[protein] + 3 S-adenosyl-L-methionine = N(6),N(6),N(6)-trimethyl-L-lysyl-[protein] + 3 S-adenosyl-L-homocysteine + 3 H(+). Its function is as follows. Methylates ribosomal protein L11. This is Ribosomal protein L11 methyltransferase from Xylella fastidiosa (strain Temecula1 / ATCC 700964).